Reading from the N-terminus, the 341-residue chain is Biotin synthase (341 aa).

Residues 40 to 267 (AEIQVSTLLS…RSMVRLSAGR (228 aa)) enclose the Radical SAM core domain. Residues C55, C59, and C62 each coordinate [4Fe-4S] cluster. Positions 99, 130, 190, and 262 each coordinate [2Fe-2S] cluster.

This sequence belongs to the radical SAM superfamily. Biotin synthase family. Homodimer. [4Fe-4S] cluster serves as cofactor. It depends on [2Fe-2S] cluster as a cofactor.

It catalyses the reaction (4R,5S)-dethiobiotin + (sulfur carrier)-SH + 2 reduced [2Fe-2S]-[ferredoxin] + 2 S-adenosyl-L-methionine = (sulfur carrier)-H + biotin + 2 5'-deoxyadenosine + 2 L-methionine + 2 oxidized [2Fe-2S]-[ferredoxin]. The protein operates within cofactor biosynthesis; biotin biosynthesis; biotin from 7,8-diaminononanoate: step 2/2. Functionally, catalyzes the conversion of dethiobiotin (DTB) to biotin by the insertion of a sulfur atom into dethiobiotin via a radical-based mechanism. The polypeptide is Biotin synthase (Xylella fastidiosa (strain 9a5c)).